The primary structure comprises 238 residues: Ribosomal RNA small subunit methyltransferase E 1 (238 aa).

The protein belongs to the RNA methyltransferase RsmE family.

It is found in the cytoplasm. It catalyses the reaction uridine(1498) in 16S rRNA + S-adenosyl-L-methionine = N(3)-methyluridine(1498) in 16S rRNA + S-adenosyl-L-homocysteine + H(+). In terms of biological role, specifically methylates the N3 position of the uracil ring of uridine 1498 (m3U1498) in 16S rRNA. Acts on the fully assembled 30S ribosomal subunit. In Borreliella burgdorferi (strain ATCC 35210 / DSM 4680 / CIP 102532 / B31) (Borrelia burgdorferi), this protein is Ribosomal RNA small subunit methyltransferase E 1 (rsmE1).